Reading from the N-terminus, the 72-residue chain is Translation initiation factor IF-1 (72 aa).

Positions 1 to 72 (MIKEDNIEMH…SKGRIIFRSR (72 aa)) constitute an S1-like domain.

This sequence belongs to the IF-1 family. Component of the 30S ribosomal translation pre-initiation complex which assembles on the 30S ribosome in the order IF-2 and IF-3, IF-1 and N-formylmethionyl-tRNA(fMet); mRNA recruitment can occur at any time during PIC assembly.

Its subcellular location is the cytoplasm. Its function is as follows. One of the essential components for the initiation of protein synthesis. Stabilizes the binding of IF-2 and IF-3 on the 30S subunit to which N-formylmethionyl-tRNA(fMet) subsequently binds. Helps modulate mRNA selection, yielding the 30S pre-initiation complex (PIC). Upon addition of the 50S ribosomal subunit IF-1, IF-2 and IF-3 are released leaving the mature 70S translation initiation complex. In Blochmanniella floridana, this protein is Translation initiation factor IF-1.